Consider the following 533-residue polypeptide: Retinoid isomerohydrolase (533 aa).

At Ser-2 the chain carries N-acetylserine. 2 positions are modified to phosphothreonine: Thr-101 and Thr-105. Cys-112 is lipidated: S-palmitoyl cysteine; in membrane form. Lys-113 carries the post-translational modification N6-acetyllysine. Ser-117 carries the post-translational modification Phosphoserine. His-180 serves as a coordination point for Fe cation. Cys-231 carries the S-palmitoyl cysteine; in membrane form lipid modification. Fe cation contacts are provided by His-241 and His-313. S-palmitoyl cysteine; in membrane form attachment occurs at residues Cys-329 and Cys-330. A Fe cation-binding site is contributed by His-527.

It belongs to the carotenoid oxygenase family. As to quaternary structure, interacts with MYO7A; this mediates light-dependent intracellular transport of RPE65. The cofactor is Fe(2+). Post-translationally, palmitoylation by LRAT regulates ligand binding specificity; the palmitoylated form (membrane form) specifically binds all-trans-retinyl-palmitate, while the soluble unpalmitoylated form binds all-trans-retinol (vitamin A). Retinal pigment epithelium specific.

It localises to the cytoplasm. Its subcellular location is the cell membrane. The protein localises to the microsome membrane. The enzyme catalyses an all-trans-retinyl ester + H2O = 11-cis-retinol + a fatty acid + H(+). It catalyses the reaction lutein = (3R,3'S)-zeaxanthin. It carries out the reaction all-trans-retinyl hexadecanoate + H2O = 11-cis-retinol + hexadecanoate + H(+). Functionally, critical isomerohydrolase in the retinoid cycle involved in regeneration of 11-cis-retinal, the chromophore of rod and cone opsins. Catalyzes the cleavage and isomerization of all-trans-retinyl fatty acid esters to 11-cis-retinol which is further oxidized by 11-cis retinol dehydrogenase to 11-cis-retinal for use as visual chromophore. Essential for the production of 11-cis retinal for both rod and cone photoreceptors. Also capable of catalyzing the isomerization of lutein to meso-zeaxanthin an eye-specific carotenoid. The soluble form binds vitamin A (all-trans-retinol), making it available for LRAT processing to all-trans-retinyl ester. The membrane form, palmitoylated by LRAT, binds all-trans-retinyl esters, making them available for IMH (isomerohydrolase) processing to all-cis-retinol. The soluble form is regenerated by transferring its palmitoyl groups onto 11-cis-retinol, a reaction catalyzed by LRAT. This is Retinoid isomerohydrolase (RPE65) from Canis lupus familiaris (Dog).